The following is a 366-amino-acid chain: uncharacterized protein (366 aa).

6 helical membrane-spanning segments follow: residues 164 to 184 (IPLI…FADI), 188 to 208 (IVVG…RKLL), 223 to 243 (VFPI…IYSL), 256 to 276 (FIGE…LILM), 299 to 319 (FFCL…GEYL), and 325 to 345 (FIMF…LSVI).

To A.fulgidus AF2058.

It is found in the cell membrane. This is an uncharacterized protein from Methanocaldococcus jannaschii (strain ATCC 43067 / DSM 2661 / JAL-1 / JCM 10045 / NBRC 100440) (Methanococcus jannaschii).